Here is a 106-residue protein sequence, read N- to C-terminus: EspC protein homolog (106 aa).

This sequence belongs to the EspC family.

In Mycobacterium leprae (strain TN), this protein is EspC protein homolog.